An 89-amino-acid chain; its full sequence is MALDAAVKQSIIKDFATSEGDTGSPEVQVAVLTQRIKDLTEHMKEHKHDFHTQRGLLAMVGRRKRMLTYLKNTDINRYRALIERLGLRR.

The protein belongs to the universal ribosomal protein uS15 family. As to quaternary structure, part of the 30S ribosomal subunit. Forms a bridge to the 50S subunit in the 70S ribosome, contacting the 23S rRNA.

Functionally, one of the primary rRNA binding proteins, it binds directly to 16S rRNA where it helps nucleate assembly of the platform of the 30S subunit by binding and bridging several RNA helices of the 16S rRNA. In terms of biological role, forms an intersubunit bridge (bridge B4) with the 23S rRNA of the 50S subunit in the ribosome. The sequence is that of Small ribosomal subunit protein uS15 from Arthrobacter sp. (strain FB24).